A 193-amino-acid chain; its full sequence is Ribosome hibernation promotion factor (193 aa).

Belongs to the HPF/YfiA ribosome-associated protein family. Long HPF subfamily. In terms of assembly, interacts with 100S ribosomes.

It is found in the cytoplasm. Might modulate either transcription and/or translation. Its function is as follows. Required for dimerization of active 70S ribosomes into 100S ribosomes in stationary phase; 100S ribosomes are translationally inactive and sometimes present during exponential growth. The sequence is that of Ribosome hibernation promotion factor from Picosynechococcus sp. (strain ATCC 27264 / PCC 7002 / PR-6) (Agmenellum quadruplicatum).